The sequence spans 141 residues: Hemoglobin subunit alpha-1/2 (141 aa).

The Globin domain occupies 1 to 141 (VLSPADKTNV…VSTVLTSKYR (141 aa)). Phosphoserine is present on Ser-3. Position 7 is an N6-succinyllysine (Lys-7). A Phosphothreonine modification is found at Thr-8. An N6-succinyllysine modification is found at Lys-11. Lys-16 carries the post-translational modification N6-acetyllysine; alternate. Residue Lys-16 is modified to N6-succinyllysine; alternate. Tyr-24 bears the Phosphotyrosine mark. At Lys-40 the chain carries N6-succinyllysine. A Phosphoserine modification is found at Ser-49. His-58 lines the O2 pocket. His-87 lines the heme b pocket. At Ser-102 the chain carries Phosphoserine. The residue at position 108 (Thr-108) is a Phosphothreonine. Phosphoserine is present on Ser-124. Thr-134 and Thr-137 each carry phosphothreonine. A Phosphoserine modification is found at Ser-138.

The protein belongs to the globin family. Heterotetramer of two alpha chains and two beta chains. In terms of tissue distribution, red blood cells.

Functionally, involved in oxygen transport from the lung to the various peripheral tissues. The chain is Hemoglobin subunit alpha-1/2 from Leptonychotes weddellii (Weddell seal).